The chain runs to 346 residues: Protein NDL1 (346 aa).

The protein belongs to the NDRG family. In terms of assembly, interacts with GB1. Interacts with the heterodimers formed by GB1 and GG1, or GB1 and GG2. Interacts with RGS1. Expressed in root vasculature, cotyledons, leaves, petals, mature stamens and pollen grains.

It is found in the cytoplasm. Its function is as follows. Interacts with the heterotrimeric G protein beta subunit GB1 and plays an significant role in GB1-dependent regulation of lateral root formation. Involved in a signaling pathway that modulates root auxin transport and auxin gradients. Acts partially by positively regulating the auxin carrier PIN2 and AUX1. Acts, together with GB1 as positive regulator of meristem initiation and branching. GB1 and NDL1 positively regulate basipetal inflorescence auxin transport and modulate MAX2 expression in shoots, which regulates organ and lateral meristem formation by the establishment and maintenance of auxin gradients. In Arabidopsis thaliana (Mouse-ear cress), this protein is Protein NDL1.